A 759-amino-acid chain; its full sequence is Short transient receptor potential channel 1 (759 aa).

The segment at 1–30 (MMAALYPSTDLSGASSSSLPSSPSSSSPNE) is disordered. Over 1–352 (MMAALYPSTD…GRIIHTPFMK (352 aa)) the chain is Cytoplasmic. Positions 15 to 28 (SSSSLPSSPSSSSP) are enriched in low complexity. ANK repeat units lie at residues 46–75 (LNEK…SGDL), 83–112 (LGRN…QKLM), and 124–153 (MDVA…SLPK). A helical transmembrane segment spans residues 353–373 (FIIHGASYFTFLLLLNLYSLV). Topologically, residues 374-381 (YNEDKKNT) are extracellular. A helical membrane pass occupies residues 382 to 402 (MGPALERIDYLLILWIIGMIW). Topologically, residues 403 to 461 (SDIKRLWYEGLEDFLEESRNQLSFVMNSLYLATFALKVVAHNKFHDFADRKDWDAFHPT) are cytoplasmic. The chain crosses the membrane as a helical span at residues 462 to 482 (LVAEGLFAFANVLSYLRLFFM). Over 483–505 (YTTSSILGPLQISMGQMLQDFGK) the chain is Extracellular. A helical membrane pass occupies residues 506–526 (FLGMFLLVLFSFTIGLTQLYD). Residues 527–552 (KGYTPKEQKDCVGIFCEQQSNDTFHS) lie on the Cytoplasmic side of the membrane. A helical membrane pass occupies residues 553-573 (FIGTCFALFWYIFSLAHVAIF). Over 574–582 (VTRFSYGEE) the chain is Extracellular. A helical membrane pass occupies residues 583 to 603 (LQSFVGAVIVGTYNVVVVIVL). At 604–759 (TKLLVAMLHK…SKYAMFYPRN (156 aa)) the chain is on the cytoplasmic side.

This sequence belongs to the transient receptor (TC 1.A.4) family. STrpC subfamily. TRPC1 sub-subfamily. As to quaternary structure, homotetramer and heterotetramer with TRPC4 and/or TRPC5. Interacts with TRPC4 and TRPC5. Interacts with ITPR3. Interacts with MX1 and RNF24. Interacts with FKBP4. Interacts with TRPC4AP. Interacts with PLSCR1. Interacts with PKD2L2. Forms a heterotetramer with PKD2 with a 2:2 stoichiometry; has distinct channel properties separate from PKD2 or TRPC1 homomers alone. Post-translationally, activation of PRKCA induces phosphorylation of TRPC1 and subsequent Ca2+ entry into cells.

It is found in the cell membrane. The catalysed reaction is Ca(2+)(in) = Ca(2+)(out). Its function is as follows. Forms a receptor-activated non-selective calcium permeant cation channel. Probably is operated by a phosphatidylinositol second messenger system activated by receptor tyrosine kinases or G-protein coupled receptors. Also activated by intracellular calcium store depletion. This is Short transient receptor potential channel 1 (TRPC1) from Oryctolagus cuniculus (Rabbit).